Consider the following 159-residue polypeptide: MNITILSVGKLKEKYIKQGIDEYKKRLSAYAKIQEIEVPDEKAPEHLSTEDMRLVKKKEGERLLAKISADSYVIALAIEGNMKTSEQLAKNIEQLGTYGKSKIAFIIGGSLGLSNDVYARADELLSFSKMTFPHQLMKLVLFEQLYRSFRIMRGEPYHK.

Residues leucine 76, glycine 108, and phenylalanine 127 to phenylalanine 132 contribute to the S-adenosyl-L-methionine site.

The protein belongs to the RNA methyltransferase RlmH family. Homodimer.

The protein localises to the cytoplasm. It carries out the reaction pseudouridine(1915) in 23S rRNA + S-adenosyl-L-methionine = N(3)-methylpseudouridine(1915) in 23S rRNA + S-adenosyl-L-homocysteine + H(+). Its function is as follows. Specifically methylates the pseudouridine at position 1915 (m3Psi1915) in 23S rRNA. The protein is Ribosomal RNA large subunit methyltransferase H of Shouchella clausii (strain KSM-K16) (Alkalihalobacillus clausii).